Consider the following 406-residue polypeptide: Putative colanic acid biosynthesis glycosyltransferase WcaL (406 aa).

Belongs to the glycosyltransferase group 1 family. Glycosyltransferase 4 subfamily.

Its pathway is slime biogenesis; slime polysaccharide biosynthesis. The chain is Putative colanic acid biosynthesis glycosyltransferase WcaL (wcaL) from Salmonella typhimurium (strain LT2 / SGSC1412 / ATCC 700720).